A 450-amino-acid polypeptide reads, in one-letter code: tRNA modification GTPase MnmE (450 aa).

Arg23, Glu79, and Lys118 together coordinate (6S)-5-formyl-5,6,7,8-tetrahydrofolate. A TrmE-type G domain is found at 214-374 (GITLILVGKP…LKEHILNKVG (161 aa)). Asn224 serves as a coordination point for K(+). GTP contacts are provided by residues 224–229 (NAGKSS), 243–249 (TSIAGTT), and 268–271 (DTAG). Residue Ser228 participates in Mg(2+) binding. K(+) contacts are provided by Thr243, Ile245, and Thr248. Thr249 contributes to the Mg(2+) binding site. Lys450 serves as a coordination point for (6S)-5-formyl-5,6,7,8-tetrahydrofolate.

This sequence belongs to the TRAFAC class TrmE-Era-EngA-EngB-Septin-like GTPase superfamily. TrmE GTPase family. In terms of assembly, homodimer. Heterotetramer of two MnmE and two MnmG subunits. K(+) serves as cofactor.

The protein resides in the cytoplasm. Its function is as follows. Exhibits a very high intrinsic GTPase hydrolysis rate. Involved in the addition of a carboxymethylaminomethyl (cmnm) group at the wobble position (U34) of certain tRNAs, forming tRNA-cmnm(5)s(2)U34. The protein is tRNA modification GTPase MnmE of Francisella tularensis subsp. tularensis (strain WY96-3418).